The chain runs to 372 residues: MKFIDEARIEVIAGDGGDGSASMRREKFVPFGGPDGGDGGRGGSVYVIADRNINTLIDYRYAKKHMARNGENGRGSDCYGKGGDDVTLRMPVGTVINDMDTGELIADLTEHDQKVLVAKGGAGGLGNLHFKSSTNRAPRQKTDGKPGERRMLKLELKVLADVGLLGMPNAGKSTFISSVSNAKPKIADYPFTTLAPNLGVVRVGPGKSFVIADIPGLIEGAAEGAGLGHQFLRHLQRTGLLLHLVDLAPFDESVDPVAEAKAIVGELRKYDESLYQKPRWLVLNKLDMVPEDERRTRVVDFIERFGWTGPVFEISALTGQGCEGLVYAIYDYLAEHSDAHRAELAEDLASDVRFRDASGAGGEPHEREADAP.

An Obg domain is found at 1-159; it reads MKFIDEARIE…RMLKLELKVL (159 aa). The tract at residues 128 to 147 is disordered; that stretch reads LHFKSSTNRAPRQKTDGKPG. The region spanning 160–334 is the OBG-type G domain; sequence ADVGLLGMPN…LVYAIYDYLA (175 aa). Residues 166-173, 191-195, 213-216, 284-287, and 315-317 contribute to the GTP site; these read GMPNAGKS, FTTLA, DIPG, NKLD, and SAL. Residues serine 173 and threonine 193 each contribute to the Mg(2+) site.

It belongs to the TRAFAC class OBG-HflX-like GTPase superfamily. OBG GTPase family. In terms of assembly, monomer. Requires Mg(2+) as cofactor.

Its subcellular location is the cytoplasm. Functionally, an essential GTPase which binds GTP, GDP and possibly (p)ppGpp with moderate affinity, with high nucleotide exchange rates and a fairly low GTP hydrolysis rate. Plays a role in control of the cell cycle, stress response, ribosome biogenesis and in those bacteria that undergo differentiation, in morphogenesis control. The chain is GTPase Obg from Burkholderia thailandensis (strain ATCC 700388 / DSM 13276 / CCUG 48851 / CIP 106301 / E264).